A 418-amino-acid polypeptide reads, in one-letter code: Translation initiation factor 2 subunit gamma (418 aa).

In terms of domain architecture, tr-type G spans 7–206 (QPEVNIGVVG…GIQKYIPTPQ (200 aa)). Residues 16–23 (GHVDHGKT) form a G1 region. Residues Asp-19, Thr-23, Gly-44, and Thr-46 each contribute to the Mg(2+) site. 19-24 (DHGKTT) provides a ligand contact to GTP. Positions 44 to 48 (GMTIK) are G2. Positions 59, 62, 74, and 77 each coordinate Zn(2+). Positions 93 to 96 (DAPG) are G3. GTP-binding positions include 149–152 (NKVD) and 184–186 (SAL). The interval 149–152 (NKVD) is G4. Positions 184–186 (SAL) are G5.

Belongs to the TRAFAC class translation factor GTPase superfamily. Classic translation factor GTPase family. EIF2G subfamily. In terms of assembly, heterotrimer composed of an alpha, a beta and a gamma chain. Mg(2+) serves as cofactor.

The catalysed reaction is GTP + H2O = GDP + phosphate + H(+). Functionally, eIF-2 functions in the early steps of protein synthesis by forming a ternary complex with GTP and initiator tRNA. This Sulfurisphaera tokodaii (strain DSM 16993 / JCM 10545 / NBRC 100140 / 7) (Sulfolobus tokodaii) protein is Translation initiation factor 2 subunit gamma.